The following is a 415-amino-acid chain: Trehalose synthase (415 aa).

It belongs to the glycosyltransferase group 1 family. Glycosyltransferase 4 subfamily. In terms of assembly, homodimer. Mg(2+) is required as a cofactor.

The catalysed reaction is an NDP-alpha-D-glucose + D-glucose = alpha,alpha-trehalose + a ribonucleoside 5'-diphosphate + H(+). Its function is as follows. Synthesizes trehalose from ADP-, UDP- or GDP-glucose and glucose. This chain is Trehalose synthase, found in Pyrococcus horikoshii (strain ATCC 700860 / DSM 12428 / JCM 9974 / NBRC 100139 / OT-3).